The sequence spans 149 residues: Large ribosomal subunit protein bL9 (149 aa).

The protein belongs to the bacterial ribosomal protein bL9 family.

Its function is as follows. Binds to the 23S rRNA. This Ligilactobacillus salivarius (strain UCC118) (Lactobacillus salivarius) protein is Large ribosomal subunit protein bL9.